We begin with the raw amino-acid sequence, 273 residues long: Pyrroline-5-carboxylate reductase (273 aa).

Belongs to the pyrroline-5-carboxylate reductase family.

It is found in the cytoplasm. It carries out the reaction L-proline + NADP(+) = (S)-1-pyrroline-5-carboxylate + NADPH + 2 H(+). It catalyses the reaction L-proline + NAD(+) = (S)-1-pyrroline-5-carboxylate + NADH + 2 H(+). It functions in the pathway amino-acid biosynthesis; L-proline biosynthesis; L-proline from L-glutamate 5-semialdehyde: step 1/1. This is Pyrroline-5-carboxylate reductase (PROC) from Pisum sativum (Garden pea).